The following is a 349-amino-acid chain: MIINSLKRFGITTGAAASAAAKAAVIGLLNREKRNTVVIPTPIGLRLEIPVEKVEIDSGIACAEVKKFSGDNPDILDGLAIRCCAKLNESNEIVIVGGKGVGKVTRSGLKATMGETAISPTVRDMVINAIREVTDKGIQITIEVPNGDIIAENTLNKMVGIVGGISILGTTGIETPVSDDDYLEHIKCELNVIRQSYDFVVIAPGNSAAKYASKLFDSNSIIKVGDRIGDSIKLASSVFRKVILAGLPAKLLKVYAGIFNTHFSQGDARLESLTHASVLAGLPYDVLTKITNALSVEEAFTYMTKEQRRKVMKIVAEKILSRIKSFNGDINFCVIIFDYDGESLSRVGC.

This sequence belongs to the CbiD family.

It catalyses the reaction Co-precorrin-5B + S-adenosyl-L-methionine = Co-precorrin-6A + S-adenosyl-L-homocysteine. It functions in the pathway cofactor biosynthesis; adenosylcobalamin biosynthesis; cob(II)yrinate a,c-diamide from sirohydrochlorin (anaerobic route): step 6/10. Functionally, catalyzes the methylation of C-1 in cobalt-precorrin-5B to form cobalt-precorrin-6A. The sequence is that of Cobalt-precorrin-5B C(1)-methyltransferase from Saccharolobus islandicus (strain M.16.27) (Sulfolobus islandicus).